Reading from the N-terminus, the 351-residue chain is Uroporphyrinogen decarboxylase (351 aa).

Residues 25 to 29, Asp74, Tyr151, Ser206, and His325 each bind substrate; that span reads RQAGR.

Belongs to the uroporphyrinogen decarboxylase family. In terms of assembly, homodimer.

The protein resides in the cytoplasm. The enzyme catalyses uroporphyrinogen III + 4 H(+) = coproporphyrinogen III + 4 CO2. It participates in porphyrin-containing compound metabolism; protoporphyrin-IX biosynthesis; coproporphyrinogen-III from 5-aminolevulinate: step 4/4. Catalyzes the decarboxylation of four acetate groups of uroporphyrinogen-III to yield coproporphyrinogen-III. The polypeptide is Uroporphyrinogen decarboxylase (Pelodictyon phaeoclathratiforme (strain DSM 5477 / BU-1)).